Reading from the N-terminus, the 276-residue chain is Small ribosomal subunit protein uS3 (276 aa).

Positions 38 to 106 (IRRMMTKGME…QVQLNILEVK (69 aa)) constitute a KH type-2 domain. Residues 216–228 (NAAARAGNRPARG) are compositionally biased toward low complexity. The interval 216–276 (NAAARAGNRP…PAAESTGTEA (61 aa)) is disordered. The segment covering 229–245 (GADRPAGRGGRGGERGG) has biased composition (basic and acidic residues). Positions 254 to 269 (PAAEAPKADAAAAPAA) are enriched in low complexity.

The protein belongs to the universal ribosomal protein uS3 family. Part of the 30S ribosomal subunit. Forms a tight complex with proteins S10 and S14.

Binds the lower part of the 30S subunit head. Binds mRNA in the 70S ribosome, positioning it for translation. The sequence is that of Small ribosomal subunit protein uS3 from Streptomyces griseus subsp. griseus (strain JCM 4626 / CBS 651.72 / NBRC 13350 / KCC S-0626 / ISP 5235).